The following is a 273-amino-acid chain: uncharacterized protein (273 aa).

This is an uncharacterized protein from Acanthamoeba polyphaga (Amoeba).